Here is a 127-residue protein sequence, read N- to C-terminus: MRHQKSGRKFSRTSAHREAMFKNMAASLFKHELIKTTLPKAKELRRVAEPLITLAKVDSVANRRLAFARLRDNEAVGNLFTILGPRYANRPGGYLRLLKCGFRAGDNAPMAYVELVDRPVVAEAVAE.

The protein belongs to the bacterial ribosomal protein bL17 family. As to quaternary structure, part of the 50S ribosomal subunit. Contacts protein L32.

This is Large ribosomal subunit protein bL17 from Stenotrophomonas maltophilia (strain R551-3).